A 367-amino-acid polypeptide reads, in one-letter code: Protein NDRG4-B (367 aa).

Basic and acidic residues predominate over residues 1 to 12 (MSELRFPEEKPL). Disordered stretches follow at residues 1–21 (MSEL…TEME) and 333–367 (LTSA…EVSC). The span at 347–367 (CTQSESSDGIGQINHTMEVSC) shows a compositional bias: polar residues.

Belongs to the NDRG family.

Its subcellular location is the cytoplasm. It localises to the cytosol. Functionally, contributes to the maintenance of intracerebral BDNF levels within the normal range. May enhance growth factor-induced ERK1 and ERK2 phosphorylation. May attenuate growth factor-promoted ELK1 phosphorylation in a microtubule-dependent manner. The protein is Protein NDRG4-B (ndrg4-b) of Xenopus laevis (African clawed frog).